Reading from the N-terminus, the 887-residue chain is Alanine--tRNA ligase (887 aa).

Positions 564, 568, 676, and 680 each coordinate Zn(2+). The interval 854-873 is disordered; that stretch reads GQGGGGRPDMAQSGGPKGNK.

Belongs to the class-II aminoacyl-tRNA synthetase family. Requires Zn(2+) as cofactor.

It localises to the cytoplasm. The catalysed reaction is tRNA(Ala) + L-alanine + ATP = L-alanyl-tRNA(Ala) + AMP + diphosphate. Functionally, catalyzes the attachment of alanine to tRNA(Ala) in a two-step reaction: alanine is first activated by ATP to form Ala-AMP and then transferred to the acceptor end of tRNA(Ala). Also edits incorrectly charged Ser-tRNA(Ala) and Gly-tRNA(Ala) via its editing domain. In Bartonella henselae (strain ATCC 49882 / DSM 28221 / CCUG 30454 / Houston 1) (Rochalimaea henselae), this protein is Alanine--tRNA ligase.